The following is a 95-amino-acid chain: CRISPR-associated endoribonuclease Cas2 1 (95 aa).

Asp-8 contributes to the Mg(2+) binding site.

Belongs to the CRISPR-associated endoribonuclease Cas2 protein family. Homodimer, forms a heterotetramer with a Cas1 homodimer. Mg(2+) is required as a cofactor.

In terms of biological role, CRISPR (clustered regularly interspaced short palindromic repeat), is an adaptive immune system that provides protection against mobile genetic elements (viruses, transposable elements and conjugative plasmids). CRISPR clusters contain sequences complementary to antecedent mobile elements and target invading nucleic acids. CRISPR clusters are transcribed and processed into CRISPR RNA (crRNA). Functions as a ssRNA-specific endoribonuclease. Involved in the integration of spacer DNA into the CRISPR cassette. The polypeptide is CRISPR-associated endoribonuclease Cas2 1 (Pyrobaculum aerophilum (strain ATCC 51768 / DSM 7523 / JCM 9630 / CIP 104966 / NBRC 100827 / IM2)).